Here is a 212-residue protein sequence, read N- to C-terminus: ATP synthase F(0) complex subunit a (212 aa).

A run of 6 helical transmembrane segments spans residues 3–23 (MMGI…IYTS), 58–78 (WAAM…LGLL), 87–107 (QLSM…LTGL), 128–148 (IPLL…ALGV), 169–189 (FVLL…LVLL), and 192–212 (LEIA…TLYL).

Belongs to the ATPase A chain family. As to quaternary structure, component of the ATP synthase complex composed at least of ATP5F1A/subunit alpha, ATP5F1B/subunit beta, ATP5MC1/subunit c (homooctomer), MT-ATP6/subunit a, MT-ATP8/subunit 8, ATP5ME/subunit e, ATP5MF/subunit f, ATP5MG/subunit g, ATP5MK/subunit k, ATP5MJ/subunit j, ATP5F1C/subunit gamma, ATP5F1D/subunit delta, ATP5F1E/subunit epsilon, ATP5PF/subunit F6, ATP5PB/subunit b, ATP5PD/subunit d, ATP5PO/subunit OSCP. ATP synthase complex consists of a soluble F(1) head domain (subunits alpha(3) and beta(3)) - the catalytic core - and a membrane F(0) domain - the membrane proton channel (subunits c, a, 8, e, f, g, k and j). These two domains are linked by a central stalk (subunits gamma, delta, and epsilon) rotating inside the F1 region and a stationary peripheral stalk (subunits F6, b, d, and OSCP). Interacts with DNAJC30; interaction is direct.

Its subcellular location is the mitochondrion inner membrane. The catalysed reaction is H(+)(in) = H(+)(out). In terms of biological role, subunit a, of the mitochondrial membrane ATP synthase complex (F(1)F(0) ATP synthase or Complex V) that produces ATP from ADP in the presence of a proton gradient across the membrane which is generated by electron transport complexes of the respiratory chain. ATP synthase complex consist of a soluble F(1) head domain - the catalytic core - and a membrane F(1) domain - the membrane proton channel. These two domains are linked by a central stalk rotating inside the F(1) region and a stationary peripheral stalk. During catalysis, ATP synthesis in the catalytic domain of F(1) is coupled via a rotary mechanism of the central stalk subunits to proton translocation. With the subunit c (ATP5MC1), forms the proton-conducting channel in the F(0) domain, that contains two crucial half-channels (inlet and outlet) that facilitate proton movement from the mitochondrial intermembrane space (IMS) into the matrix. Protons are taken up via the inlet half-channel and released through the outlet half-channel, following a Grotthuss mechanism. The sequence is that of ATP synthase F(0) complex subunit a from Tropidurus hispidus (Peters' lava lizard).